We begin with the raw amino-acid sequence, 192 residues long: UPF0149 protein Spro_3920 (192 aa).

The protein belongs to the UPF0149 family.

This chain is UPF0149 protein Spro_3920, found in Serratia proteamaculans (strain 568).